A 194-amino-acid chain; its full sequence is Peptidyl-tRNA hydrolase (194 aa).

Tyr17 is a binding site for tRNA. The Proton acceptor role is filled by His22. TRNA-binding residues include Tyr68, Asn70, and Asn115.

The protein belongs to the PTH family. Monomer.

The protein localises to the cytoplasm. The enzyme catalyses an N-acyl-L-alpha-aminoacyl-tRNA + H2O = an N-acyl-L-amino acid + a tRNA + H(+). In terms of biological role, hydrolyzes ribosome-free peptidyl-tRNAs (with 1 or more amino acids incorporated), which drop off the ribosome during protein synthesis, or as a result of ribosome stalling. Functionally, catalyzes the release of premature peptidyl moieties from peptidyl-tRNA molecules trapped in stalled 50S ribosomal subunits, and thus maintains levels of free tRNAs and 50S ribosomes. In Pseudoalteromonas atlantica (strain T6c / ATCC BAA-1087), this protein is Peptidyl-tRNA hydrolase.